The primary structure comprises 630 residues: Plastin-1 (630 aa).

M1 carries the post-translational modification N-acetylmethionine. 2 EF-hand domains span residues 11–46 (EELE…ASLP) and 51–86 (KVRE…LKSK). Ca(2+) is bound by residues D24, D26, S28, Y30, E35, D64, N66, D68, K70, and E75. 2 actin-binding regions span residues 108–381 (TSSI…CLHK) and 382–626 (PDNN…GKGL). Calponin-homology (CH) domains lie at 122–238 (EEEK…KVGL), 266–377 (LSPE…NTYP), 396–505 (SKEE…RRYT), and 517–626 (KVTD…GKGL).

In terms of assembly, monomer. In terms of processing, phosphorylated. In terms of tissue distribution, in the inner ear, it is expressed in the organ of Corti. Abundant in the utricle (at protein level).

It is found in the cytoplasm. It localises to the cell projection. The protein resides in the stereocilium. Functionally, actin-bundling protein. In the inner ear, it is required for stereocilia formation. Mediates liquid packing of actin filaments that is necessary for stereocilia to grow to their proper dimensions. The protein is Plastin-1 (Pls1) of Mus musculus (Mouse).